A 634-amino-acid chain; its full sequence is MRWLRPAGRRREQESVSGHLGPPAGAPAAPETPTCLPDTTPHPAPVVCSADPQLALESLDPRTLRLLWRQRELEIQALRWAIQNGEDARLCHILEEVAGLPPKRSSHSQEKLLQNQVQKLIQELKEQKERAQWEKEHLEERLLQTTRTLQEMEAELQNLQKSCLLQLARSSWVGRMLRSQTGSVEVVTAETLMDPSDLSENIQAPTGEGFRLEDVDWNSVARRYPNLFTNMEPSSKQKQPRPWPQLDTGSPESSGKHSERHHKTVEWGSLPCLNTSSSGGADSDSSSCRPGLPSFVQVIGHPPRDHRASSEQALVQAGSYSRDSEDLQKTHSPRHGEPVLSPQPCTDPDHWSPELLQSPTGLKIVAVSCREKFVRIFNPSQESTADLSGMVLKQLVRGFPERLYRFPPGTLLAPRHHVTVWGEATRSAKKPLRASSSREPVPLLSIRGCATLLLSPKGEVLSEHRIPRRETPAPRVFADGTDLSIDRFPLPEAGPGADTRKPPRPPRPLRKGRVREPRVSRRRPGTRGLLPPVSSGKLFHAREGPARPENPEIPAPQHLPAIPGDPTLPSPPAEAGLGLEDCRLQKEHRVRVCRKSVDRSCPLVALSVQNTAESRFGFRFLSCLPVTADTCRGA.

The interval 1–44 is disordered; it reads MRWLRPAGRRREQESVSGHLGPPAGAPAAPETPTCLPDTTPHPA. Residues 106–169 adopt a coiled-coil conformation; sequence SHSQEKLLQN…QKSCLLQLAR (64 aa). The segment covering 228–237 has biased composition (polar residues); the sequence is FTNMEPSSKQ. Disordered regions lie at residues 228-349 and 464-575; these read FTNM…TDPD and HRIP…PAEA. Residues 276–287 are compositionally biased toward low complexity; it reads SSSGGADSDSSS. Over residues 310–321 the composition is skewed to polar residues; that stretch reads SEQALVQAGSYS. Positions 322–337 are enriched in basic and acidic residues; it reads RDSEDLQKTHSPRHGE. In terms of domain architecture, LTD spans 350-468; it reads HWSPELLQSP…EVLSEHRIPR (119 aa). Positions 502 to 513 are enriched in basic residues; the sequence is PPRPPRPLRKGR. Residues 540 to 550 show a composition bias toward basic and acidic residues; sequence HAREGPARPEN.

The chain is Lamin tail domain-containing protein 2 (LMNTD2) from Homo sapiens (Human).